Consider the following 259-residue polypeptide: Leucine-rich repeat-containing protein 3B (259 aa).

The first 33 residues, 1–33 (MNLVDLWLTRSLSMCLLLQSFVLMILCFHSASM), serve as a signal peptide directing secretion. In terms of domain architecture, LRRNT spans 34–64 (CPKGCLCSSSGGLNVTCSNANLKEIPRDLPP). N-linked (GlcNAc...) asparagine glycosylation occurs at Asn-47. 3 LRR repeats span residues 65–86 (ETVL…IFKD), 89–110 (QLRV…AFKG), and 114–135 (TLQT…AFNN). N-linked (GlcNAc...) asparagine glycosylation is present at Asn-94. An LRRCT domain is found at 145–197 (NPWHCDCTLQQVLRSMASNHETAHNVICKTSVLDEHAGRPFLNAANDADLCNL). Residues 205 to 225 (AMLVTMFGWFTMVISYVVYYV) form a helical membrane-spanning segment.

It belongs to the LRRC3 family.

It localises to the membrane. This chain is Leucine-rich repeat-containing protein 3B (LRRC3B), found in Homo sapiens (Human).